The following is a 205-amino-acid chain: Probable GTP-binding protein EngB (205 aa).

The region spanning Q21–E196 is the EngB-type G domain. GTP contacts are provided by residues G29–S36, G56–Q60, D74–G77, T141–D144, and I172–S177. 2 residues coordinate Mg(2+): S36 and T58.

The protein belongs to the TRAFAC class TrmE-Era-EngA-EngB-Septin-like GTPase superfamily. EngB GTPase family. It depends on Mg(2+) as a cofactor.

Its function is as follows. Necessary for normal cell division and for the maintenance of normal septation. This Anaplasma marginale (strain Florida) protein is Probable GTP-binding protein EngB.